Consider the following 183-residue polypeptide: TATA-box-binding protein (183 aa).

Repeat copies occupy residues 7-83 (IENV…ARTL) and 99-177 (VQNI…RQQL).

This sequence belongs to the TBP family.

General factor that plays a role in the activation of archaeal genes transcribed by RNA polymerase. Binds specifically to the TATA box promoter element which lies close to the position of transcription initiation. The sequence is that of TATA-box-binding protein from Methanothrix thermoacetophila (strain DSM 6194 / JCM 14653 / NBRC 101360 / PT) (Methanosaeta thermophila).